The sequence spans 269 residues: Regulatory protein RecX (269 aa).

Belongs to the RecX family.

It localises to the cytoplasm. In terms of biological role, modulates RecA activity. The protein is Regulatory protein RecX of Listeria welshimeri serovar 6b (strain ATCC 35897 / DSM 20650 / CCUG 15529 / CIP 8149 / NCTC 11857 / SLCC 5334 / V8).